Here is a 141-residue protein sequence, read N- to C-terminus: Nucleoside diphosphate kinase (141 aa).

The ATP site is built by Lys-11, Phe-59, Arg-87, Thr-93, Arg-104, and Asn-114. The active-site Pros-phosphohistidine intermediate is the His-117.

This sequence belongs to the NDK family. In terms of assembly, homotetramer. It depends on Mg(2+) as a cofactor.

The protein resides in the cytoplasm. The catalysed reaction is a 2'-deoxyribonucleoside 5'-diphosphate + ATP = a 2'-deoxyribonucleoside 5'-triphosphate + ADP. The enzyme catalyses a ribonucleoside 5'-diphosphate + ATP = a ribonucleoside 5'-triphosphate + ADP. In terms of biological role, major role in the synthesis of nucleoside triphosphates other than ATP. The ATP gamma phosphate is transferred to the NDP beta phosphate via a ping-pong mechanism, using a phosphorylated active-site intermediate. The polypeptide is Nucleoside diphosphate kinase (Paracidovorax citrulli (strain AAC00-1) (Acidovorax citrulli)).